The primary structure comprises 385 residues: Chaperone protein DnaJ (385 aa).

The region spanning 5 to 70 is the J domain; that stretch reads DYYEVLGVAK…QKRAAYDRFG (66 aa). The segment at 141-219 adopts a CR-type zinc-finger fold; that stretch reads GKTETIRIPT…CSGAGRVNRE (79 aa). Residues cysteine 154, cysteine 157, cysteine 171, cysteine 174, cysteine 193, cysteine 196, cysteine 207, and cysteine 210 each contribute to the Zn(2+) site. CXXCXGXG motif repeat units lie at residues 154–161, 171–178, 193–200, and 207–214; these read CETCSGTG, CSTCGGYG, CPNCHGRG, and CTACSGAG.

Belongs to the DnaJ family. Homodimer. Requires Zn(2+) as cofactor.

It is found in the cytoplasm. Functionally, participates actively in the response to hyperosmotic and heat shock by preventing the aggregation of stress-denatured proteins and by disaggregating proteins, also in an autonomous, DnaK-independent fashion. Unfolded proteins bind initially to DnaJ; upon interaction with the DnaJ-bound protein, DnaK hydrolyzes its bound ATP, resulting in the formation of a stable complex. GrpE releases ADP from DnaK; ATP binding to DnaK triggers the release of the substrate protein, thus completing the reaction cycle. Several rounds of ATP-dependent interactions between DnaJ, DnaK and GrpE are required for fully efficient folding. Also involved, together with DnaK and GrpE, in the DNA replication of plasmids through activation of initiation proteins. The protein is Chaperone protein DnaJ of Methylorubrum extorquens (strain PA1) (Methylobacterium extorquens).